Reading from the N-terminus, the 448-residue chain is Bifunctional protein GlmU (448 aa).

Residues 1-232 (MTARSSLTIV…EDEVRGINTK (232 aa)) form a pyrophosphorylase region. Residues 11–14 (LAAG), Lys-25, Gln-78, and 83–84 (GT) each bind UDP-N-acetyl-alpha-D-glucosamine. Asp-108 lines the Mg(2+) pocket. Gly-144, Glu-158, Asn-173, and Asn-230 together coordinate UDP-N-acetyl-alpha-D-glucosamine. Asn-230 serves as a coordination point for Mg(2+). The linker stretch occupies residues 233–253 (AQLAQAEAAMQARLRQAAMDA). The tract at residues 254 to 448 (GVTLIAPETV…FRNAKLRQTK (195 aa)) is N-acetyltransferase. The UDP-N-acetyl-alpha-D-glucosamine site is built by Arg-319 and Lys-337. The active-site Proton acceptor is His-349. Tyr-352 and Asn-363 together coordinate UDP-N-acetyl-alpha-D-glucosamine. Acetyl-CoA contacts are provided by residues Ala-366, 372–373 (NY), Ser-409, and Arg-426. Residues 427-448 (SPQTTKEGAAARFRNAKLRQTK) are disordered.

This sequence in the N-terminal section; belongs to the N-acetylglucosamine-1-phosphate uridyltransferase family. It in the C-terminal section; belongs to the transferase hexapeptide repeat family. As to quaternary structure, homotrimer. Requires Mg(2+) as cofactor.

It localises to the cytoplasm. It catalyses the reaction alpha-D-glucosamine 1-phosphate + acetyl-CoA = N-acetyl-alpha-D-glucosamine 1-phosphate + CoA + H(+). It carries out the reaction N-acetyl-alpha-D-glucosamine 1-phosphate + UTP + H(+) = UDP-N-acetyl-alpha-D-glucosamine + diphosphate. It participates in nucleotide-sugar biosynthesis; UDP-N-acetyl-alpha-D-glucosamine biosynthesis; N-acetyl-alpha-D-glucosamine 1-phosphate from alpha-D-glucosamine 6-phosphate (route II): step 2/2. The protein operates within nucleotide-sugar biosynthesis; UDP-N-acetyl-alpha-D-glucosamine biosynthesis; UDP-N-acetyl-alpha-D-glucosamine from N-acetyl-alpha-D-glucosamine 1-phosphate: step 1/1. It functions in the pathway bacterial outer membrane biogenesis; LPS lipid A biosynthesis. In terms of biological role, catalyzes the last two sequential reactions in the de novo biosynthetic pathway for UDP-N-acetylglucosamine (UDP-GlcNAc). The C-terminal domain catalyzes the transfer of acetyl group from acetyl coenzyme A to glucosamine-1-phosphate (GlcN-1-P) to produce N-acetylglucosamine-1-phosphate (GlcNAc-1-P), which is converted into UDP-GlcNAc by the transfer of uridine 5-monophosphate (from uridine 5-triphosphate), a reaction catalyzed by the N-terminal domain. In Bradyrhizobium sp. (strain ORS 278), this protein is Bifunctional protein GlmU.